Reading from the N-terminus, the 142-residue chain is Large ribosomal subunit protein uL13 (142 aa).

The protein belongs to the universal ribosomal protein uL13 family. As to quaternary structure, part of the 50S ribosomal subunit.

This protein is one of the early assembly proteins of the 50S ribosomal subunit, although it is not seen to bind rRNA by itself. It is important during the early stages of 50S assembly. The protein is Large ribosomal subunit protein uL13 of Hahella chejuensis (strain KCTC 2396).